The sequence spans 390 residues: Chorismate synthase 1 (390 aa).

Arginine 39 and arginine 45 together coordinate NADP(+). A disordered region spans residues glutamate 95–glycine 117. FMN is bound by residues arginine 132–serine 134, asparagine 253–alanine 254, glycine 298, lysine 313–threonine 317, and arginine 339.

This sequence belongs to the chorismate synthase family. Homotetramer. It depends on FMNH2 as a cofactor.

It catalyses the reaction 5-O-(1-carboxyvinyl)-3-phosphoshikimate = chorismate + phosphate. It functions in the pathway metabolic intermediate biosynthesis; chorismate biosynthesis; chorismate from D-erythrose 4-phosphate and phosphoenolpyruvate: step 7/7. Its function is as follows. Catalyzes the anti-1,4-elimination of the C-3 phosphate and the C-6 proR hydrogen from 5-enolpyruvylshikimate-3-phosphate (EPSP) to yield chorismate, which is the branch point compound that serves as the starting substrate for the three terminal pathways of aromatic amino acid biosynthesis. This reaction introduces a second double bond into the aromatic ring system. This is Chorismate synthase 1 from Bacillus cereus (strain ZK / E33L).